A 373-amino-acid polypeptide reads, in one-letter code: MGYLLEETLSSNSKTPIVIDDDNELGLMAVRLANAAAFPMVLKAALELGVFDTLYAEASRSDSFLSPSEIASKLPTTPRNPEAPVLLDRMLRLLASYSVVKCGKVSEGKGERVYRAEPICRFFLKDNIQDIGSLASQVIVNFDSVFLNTWAQLKDVVLEGGDAFGRAHGGMKLFDYMGTDERFSKLFNQTGFTIAVVKKALEVYQGFKGVNVLVDVGGGVGNTLGVVASKYPNIKGINFDLTCALAQAPSYPGVEHVAGDMFVDVPTGDAMILKRILHDWTDEDCVKILKNCWKSLPESGKVVVIELVTPDEAENGDINANIAFDMDMLMFTQCSGGKERSRAEFEALAAASGFTHCKFVCQAYHCWIIEFCK.

S-adenosyl-L-homocysteine contacts are provided by Gly217, Asp240, Asp260, Met261, and Lys274. Residue His278 is the Proton acceptor of the active site.

Belongs to the class I-like SAM-binding methyltransferase superfamily. Cation-independent O-methyltransferase family. Interacts with B'GAMMA.

Its pathway is secondary metabolite biosynthesis. Functionally, involved in indole glucosinolate biosynthesis. Catalyzes methoxylation reactions of the glucosinolate indole ring. Converts the hydroxy intermediates 4-hydroxy-indol-3-yl-methylglucosinolate (4OH-I3M) and 1-hydroxy-indol-3-yl-methylglucosinolate (1OH-I3M) to 4-methoxy-indol-3-yl-methylglucosinolate (4MO-I3M) and 1-methoxy-indol-3-yl-methylglucosinolate(1MO-I3M), respectively. In Arabidopsis thaliana (Mouse-ear cress), this protein is Indole glucosinolate O-methyltransferase 4.